Here is a 305-residue protein sequence, read N- to C-terminus: MSTIDKEAVKLYLMQLQDQICQRLEQEDGKATFIEDAWHREPGDRLGGGGRTRVMRNGNVFEQGGVNFSHVQGNAMPASATAHRPELAGRRFEAMGVSLVMHPHNPYVPTSHANVRFFIAEKEGEAPIWWFGGGFDLTPFYPFEEDCQFWHNTAKEVCAPFGADVYAQHKAWCDDYFYLPHRGETRGIGGLFFDDLNQWEFDKCFDYIKAVGEGYCDAYLPIVERRKVTEYGEREREFQLYRRGRYVEFNLVYDRGTLFGLQSGGRTESILMSMPPLARWEYSYEPQADSPEASLYQHYLKPREW.

A substrate-binding site is contributed by serine 98. A divalent metal cation-binding residues include histidine 102 and histidine 112. The active-site Proton donor is the histidine 112. 114 to 116 is a binding site for substrate; that stretch reads NVR. A divalent metal cation is bound by residues histidine 151 and histidine 181. The important for dimerization stretch occupies residues 246 to 281; it reads YVEFNLVYDRGTLFGLQSGGRTESILMSMPPLARWE. A substrate-binding site is contributed by 264–266; the sequence is GGR.

Belongs to the aerobic coproporphyrinogen-III oxidase family. In terms of assembly, homodimer. Requires a divalent metal cation as cofactor.

The protein localises to the cytoplasm. The enzyme catalyses coproporphyrinogen III + O2 + 2 H(+) = protoporphyrinogen IX + 2 CO2 + 2 H2O. Its pathway is porphyrin-containing compound metabolism; protoporphyrin-IX biosynthesis; protoporphyrinogen-IX from coproporphyrinogen-III (O2 route): step 1/1. Its function is as follows. Involved in the heme biosynthesis. Catalyzes the aerobic oxidative decarboxylation of propionate groups of rings A and B of coproporphyrinogen-III to yield the vinyl groups in protoporphyrinogen-IX. The protein is Oxygen-dependent coproporphyrinogen-III oxidase of Vibrio vulnificus (strain YJ016).